The following is a 146-amino-acid chain: Large ribosomal subunit protein uL16c (146 aa).

Belongs to the universal ribosomal protein uL16 family. In terms of assembly, part of the 50S ribosomal subunit.

Its subcellular location is the plastid. The protein resides in the chloroplast. The sequence is that of Large ribosomal subunit protein uL16c from Angiopteris evecta (Mule's foot fern).